A 230-amino-acid polypeptide reads, in one-letter code: Somatolactin (230 aa).

The N-terminal stretch at 1–23 (MNMMTVKQGVWAALLWPYLLAAS) is a signal peptide. 3 disulfide bridges follow: Cys28–Cys38, Cys88–Cys204, and Cys221–Cys229. N-linked (GlcNAc...) asparagine glycosylation is found at Asn137 and Asn144.

Belongs to the somatotropin/prolactin family.

The protein localises to the secreted. The chain is Somatolactin from Hippoglossus hippoglossus (Atlantic halibut).